Here is a 457-residue protein sequence, read N- to C-terminus: Siroheme synthase (457 aa).

Residues 1–204 are precorrin-2 dehydrogenase /sirohydrochlorin ferrochelatase; that stretch reads MDHLPIFCQL…NDQKAITETT (204 aa). NAD(+) contacts are provided by residues 22-23 and 43-44; these read DV and LA. S128 is modified (phosphoserine). The segment at 216-457 is uroporphyrinogen-III C-methyltransferase; sequence GEVVLVGAGP…RDKLNWFSNH (242 aa). P225 lines the S-adenosyl-L-methionine pocket. D248 acts as the Proton acceptor in catalysis. The active-site Proton donor is K270. S-adenosyl-L-methionine is bound by residues 301 to 303, I306, 331 to 332, M382, and G411; these read GGD and TA.

The protein in the N-terminal section; belongs to the precorrin-2 dehydrogenase / sirohydrochlorin ferrochelatase family. This sequence in the C-terminal section; belongs to the precorrin methyltransferase family.

It carries out the reaction uroporphyrinogen III + 2 S-adenosyl-L-methionine = precorrin-2 + 2 S-adenosyl-L-homocysteine + H(+). It catalyses the reaction precorrin-2 + NAD(+) = sirohydrochlorin + NADH + 2 H(+). The enzyme catalyses siroheme + 2 H(+) = sirohydrochlorin + Fe(2+). It functions in the pathway cofactor biosynthesis; adenosylcobalamin biosynthesis; precorrin-2 from uroporphyrinogen III: step 1/1. Its pathway is cofactor biosynthesis; adenosylcobalamin biosynthesis; sirohydrochlorin from precorrin-2: step 1/1. The protein operates within porphyrin-containing compound metabolism; siroheme biosynthesis; precorrin-2 from uroporphyrinogen III: step 1/1. It participates in porphyrin-containing compound metabolism; siroheme biosynthesis; siroheme from sirohydrochlorin: step 1/1. It functions in the pathway porphyrin-containing compound metabolism; siroheme biosynthesis; sirohydrochlorin from precorrin-2: step 1/1. In terms of biological role, multifunctional enzyme that catalyzes the SAM-dependent methylations of uroporphyrinogen III at position C-2 and C-7 to form precorrin-2 via precorrin-1. Then it catalyzes the NAD-dependent ring dehydrogenation of precorrin-2 to yield sirohydrochlorin. Finally, it catalyzes the ferrochelation of sirohydrochlorin to yield siroheme. This Escherichia coli O45:K1 (strain S88 / ExPEC) protein is Siroheme synthase.